The chain runs to 40 residues: Esterase-4 (40 aa).

The protein belongs to the type-B carboxylesterase/lipase family.

It catalyses the reaction a carboxylic ester + H2O = an alcohol + a carboxylate + H(+). In Drosophila mojavensis (Fruit fly), this protein is Esterase-4 (Est-4).